Consider the following 258-residue polypeptide: MKKLSTVIIILILEIVFHNMNYVNAQPDPKLDELNKVSDYKNNKGTMGNVMNLYTSPPVEGRGVINSRQFLSHDLIFPIEYKSYNEVKTELENTELANNYKDKKVDIFGVPYFYTCIIPKSEPDINQNFGGCCMYGGLTFNSSENERDKLITVQVTIDNRQSLGFTITTNKNMVTIQELDYKARHWLTKEKKLYEFDGSAFESGYIKFTEKNNTSFWFDLFPKKELVPFVPYKFLNIYGDNKVVDSKSIKMEVFLNTH.

Positions 1-25 are cleaved as a signal peptide; it reads MKKLSTVIIILILEIVFHNMNYVNA. A disulfide bridge connects residues C116 and C133.

Belongs to the staphylococcal/streptococcal toxin family.

Its subcellular location is the secreted. In terms of biological role, staphylococcal enterotoxins cause the intoxication staphylococcal food poisoning syndrome. The illness is characterized by high fever, hypotension, diarrhea, shock, and in some cases death. This is Enterotoxin type G (entG) from Staphylococcus aureus (strain N315).